The primary structure comprises 193 residues: Adenine phosphoribosyltransferase (193 aa).

The protein belongs to the purine/pyrimidine phosphoribosyltransferase family. In terms of assembly, homodimer.

The protein resides in the cytoplasm. It catalyses the reaction AMP + diphosphate = 5-phospho-alpha-D-ribose 1-diphosphate + adenine. The protein operates within purine metabolism; AMP biosynthesis via salvage pathway; AMP from adenine: step 1/1. Catalyzes a salvage reaction resulting in the formation of AMP, that is energically less costly than de novo synthesis. In Bifidobacterium longum (strain NCC 2705), this protein is Adenine phosphoribosyltransferase.